Here is a 121-residue protein sequence, read N- to C-terminus: uncharacterized protein (121 aa).

The disordered stretch occupies residues 85–111 (NANNDDYESPYKTPKIKSNPSLDSSGS). The segment covering 100 to 111 (IKSNPSLDSSGS) has biased composition (polar residues).

This is an uncharacterized protein from Dictyostelium discoideum (Social amoeba).